Consider the following 329-residue polypeptide: MSGVVPTAPEQPAGEMENQTKPPDPRPDAPPEYNSHFLPGPPGTAVPPPTGYPGGLPMGYYSPQQPSTFPLYQPVGGIHPVRYQPGKYPMPNQSVPITWMPGPTPMANCPPGLEYLVQLDNIHVLQHFEPLEMMTCFETNNRYDIKNNSDQMVYIVTEDTDDFTRNAYRTLRPFVLRVTDCMGREIMTMQRPFRCTCCCFCCPSARQELEVQCPPGVTIGFVAEHWNLCRAVYSIQNEKKENVMRVRGPCSTYGCGSDSVFEVKSLDGISNIGSIIRKWNGLLSAMADADHFDIHFPLDLDVKMKAMIFGACFLIDFMYFERSPPQRSR.

The tract at residues 1–51 is disordered; sequence MSGVVPTAPEQPAGEMENQTKPPDPRPDAPPEYNSHFLPGPPGTAVPPPTG. Residues 1–98 are proline-rich domain (PRD); sequence MSGVVPTAPE…PMPNQSVPIT (98 aa). Residues 1 to 303 are Cytoplasmic-facing; that stretch reads MSGVVPTAPE…IHFPLDLDVK (303 aa). Positions 18–25 match the SH3-binding 1 motif; the sequence is NQTKPPDP. The short motif at 30–33 is the PPxY motif element; that stretch reads PPEY. Residues 39-51 show a composition bias toward pro residues; that stretch reads PGPPGTAVPPPTG. Residues 41 to 49 carry the SH3-binding 2 motif; that stretch reads PPGTAVPPP. A phosphotyrosine; by ABL mark is found at tyrosine 83 and tyrosine 88. The SH3-binding 3 signature appears at 98–106; sequence TWMPGPTPM. 5 S-palmitoyl cysteine lipidation sites follow: cysteine 197, cysteine 198, cysteine 199, cysteine 201, and cysteine 202. The short motif at 271 to 283 is the Nuclear localization signal element; it reads NIGSIIRKWNGLL. A helical membrane pass occupies residues 304-320; sequence MKAMIFGACFLIDFMYF. Topologically, residues 321–329 are extracellular; that stretch reads ERSPPQRSR.

The protein belongs to the phospholipid scramblase family. Interacts with PDCD6. Interacts with KPNA2; this interaction mediates the nucleus import of PLSCR4. Requires Ca(2+) as cofactor. It depends on Mg(2+) as a cofactor. Zn(2+) is required as a cofactor. In terms of tissue distribution, expressed in heart, brain, placenta, lung, liver, kidney, pancreas, spleen, thymus, prostate, testis, uterus, small intestine and colon. Not detected in peripheral blood lymphocytes.

Its subcellular location is the cell membrane. It is found in the nucleus. The catalysed reaction is a 1,2-diacyl-sn-glycero-3-phosphocholine(in) = a 1,2-diacyl-sn-glycero-3-phosphocholine(out). It catalyses the reaction a 1,2-diacyl-sn-glycero-3-phospho-L-serine(in) = a 1,2-diacyl-sn-glycero-3-phospho-L-serine(out). In terms of biological role, catalyzes metal ion-induced ATP-independent rapid bidirectional and non-specific movement of phospholipids (lipid scrambling or lipid flip-flop) between the inner and outer leaflet of the plasma membrane and participates in the redistribution of phospholipids between membrane leaflets. Metal ions bind to the calcium-binding site and induce conformation change in the protein. Has a greater affi nity for Ca(2+) than Mg(2+) and Zn(2+). The polypeptide is Phospholipid scramblase 4 (Homo sapiens (Human)).